Reading from the N-terminus, the 344-residue chain is MHQGLTLSRHTNEYAGTDKLRLAVAAAIDAIAAASIDISELIGRGPLAGITGEAQGSSNADGDVQKDLDVRCDEMILAGLQKIPYAALASEESETLVLGDPGAPISVAFDPLDGSSNIDTNMTVGTIFSIVPNKQGEAPFSAPGNVQLAAGFVVYGPQTSLVLTLGNGVDIFTLDRRDRTYKCIRQQVQIPEHTAEFAINASNHRHWEQPVRDFVEECLAGADGPRSKDFNMRWIGSLVAEAYRILTRGGIFLYPGDSRPGYGDGRLRLLYECHPMAFIIEQAGGGASTGRERVLDLAAKSIHQRAPLIMGSVDKVQRIELLHNDPAAATITAPLFGHRGLFRV.

Residues E91, D110, L112, and D113 each contribute to the Mg(2+) site. Substrate is bound by residues 113–116 (DGSS) and N200. Residue E272 participates in Mg(2+) binding.

It belongs to the FBPase class 1 family. As to quaternary structure, homotetramer. It depends on Mg(2+) as a cofactor.

The protein localises to the cytoplasm. It carries out the reaction beta-D-fructose 1,6-bisphosphate + H2O = beta-D-fructose 6-phosphate + phosphate. The protein operates within carbohydrate biosynthesis; Calvin cycle. In Rhodopseudomonas palustris (strain BisB18), this protein is Fructose-1,6-bisphosphatase class 1.